Reading from the N-terminus, the 712-residue chain is Aryl hydrocarbon receptor nuclear translocator 2 (712 aa).

Disordered regions lie at residues methionine 1–valine 20 and methionine 35–arginine 74. An Omega-N-methylarginine modification is found at arginine 42. Over residues phenylalanine 63 to arginine 73 the composition is skewed to basic and acidic residues. In terms of domain architecture, bHLH spans phenylalanine 63–methionine 116. 2 PAS domains span residues threonine 134–arginine 209 and proline 323–lysine 393. Residues serine 398–leucine 441 form the PAC domain. The disordered stretch occupies residues alanine 573–glutamate 712. Low complexity-rich tracts occupy residues serine 597–serine 626 and serine 653–glutamine 675.

In terms of assembly, efficient DNA binding requires dimerization with another bHLH protein. Heterodimer with NPAS4 or SIM1. Heterodimer with the aryl hydrocarbon receptor (AHR) or the SIM1 protein. Interacts with TACC3.

It localises to the nucleus. Its function is as follows. Transcription factor that plays a role in the development of the hypothalamo-pituitary axis, postnatal brain growth, and visual and renal function. Specifically recognizes the xenobiotic response element (XRE). In Rattus norvegicus (Rat), this protein is Aryl hydrocarbon receptor nuclear translocator 2 (Arnt2).